We begin with the raw amino-acid sequence, 226 residues long: Transmembrane protein 98 (226 aa).

Topologically, residues 1–3 (MET) are cytoplasmic. A required for interaction with MYRF region spans residues 1–88 (METVVIVAIG…ENEDWIEDAS (88 aa)). Residues 4-24 (VVIVAIGVLATIFLASFAALV) form a helical membrane-spanning segment. Over 25-226 (VVCRQRYCRP…EGFLQEQSAI (202 aa)) the chain is Extracellular. Positions 207–226 (SEPDKSLPNPEGFLQEQSAI) are disordered.

This sequence belongs to the TMEM98 family. In terms of assembly, interacts (via N-terminal region) with MYRF; the interaction inhibits MYRF self-cleavage. Expressed in differentiated oligodendrocytes in early postanatal central nervous system tissues. Expressed by CD4(+) T cells, the expression increases upon activation (at protein level).

Its subcellular location is the endoplasmic reticulum membrane. It localises to the cell membrane. It is found in the secreted. The protein resides in the extracellular exosome. In terms of biological role, functions as a negative regulator of MYRF in oligodendrocyte differentiation and myelination. Interacts with the C-terminal of MYRF inhibiting MYRF self-cleavage and N-fragment nuclear translocation. The secreted form promotes differentiation of T helper 1 cells (Th1). The sequence is that of Transmembrane protein 98 (Tmem98) from Mus musculus (Mouse).